The chain runs to 333 residues: DNA-directed RNA polymerase subunit alpha (333 aa).

Residues 1 to 235 are alpha N-terminal domain (alpha-NTD); the sequence is MQTNLLKPKA…EQLAVFAQLE (235 aa). Residues 253-333 form an alpha C-terminal domain (alpha-CTD) region; it reads FDPILLRPVD…NWPPQGLDKR (81 aa).

It belongs to the RNA polymerase alpha chain family. In terms of assembly, homodimer. The RNAP catalytic core consists of 2 alpha, 1 beta, 1 beta' and 1 omega subunit. When a sigma factor is associated with the core the holoenzyme is formed, which can initiate transcription.

The enzyme catalyses RNA(n) + a ribonucleoside 5'-triphosphate = RNA(n+1) + diphosphate. DNA-dependent RNA polymerase catalyzes the transcription of DNA into RNA using the four ribonucleoside triphosphates as substrates. This Methylibium petroleiphilum (strain ATCC BAA-1232 / LMG 22953 / PM1) protein is DNA-directed RNA polymerase subunit alpha.